Here is an 818-residue protein sequence, read N- to C-terminus: Dipeptidyl aminopeptidase B (818 aa).

Over 1–29 (MEGGEEEVERIPDELFDTKKKHLLDKLIR) the chain is Cytoplasmic. Residues 30–45 (VGIILVLLIWGTVLLL) traverse the membrane as a helical; Signal-anchor for type II membrane protein segment. Over 46-818 (KSIPHHSNTP…KRAFDGQFVK (773 aa)) the chain is Lumenal. 7 N-linked (GlcNAc...) asparagine glycosylation sites follow: Asn63, Asn79, Asn110, Asn139, Asn372, Asn392, and Asn421. Ser679 serves as the catalytic Charge relay system. The N-linked (GlcNAc...) asparagine glycan is linked to Asn738. Active-site charge relay system residues include Asp756 and His789.

It belongs to the peptidase S9B family.

It is found in the vacuole membrane. This chain is Dipeptidyl aminopeptidase B (DAP2), found in Saccharomyces cerevisiae (strain ATCC 204508 / S288c) (Baker's yeast).